Consider the following 238-residue polypeptide: Ribonuclease PH (238 aa).

Phosphate contacts are provided by residues Arg-86 and 124–126 (GTR).

It belongs to the RNase PH family. Homohexameric ring arranged as a trimer of dimers.

The enzyme catalyses tRNA(n+1) + phosphate = tRNA(n) + a ribonucleoside 5'-diphosphate. Phosphorolytic 3'-5' exoribonuclease that plays an important role in tRNA 3'-end maturation. Removes nucleotide residues following the 3'-CCA terminus of tRNAs; can also add nucleotides to the ends of RNA molecules by using nucleoside diphosphates as substrates, but this may not be physiologically important. Probably plays a role in initiation of 16S rRNA degradation (leading to ribosome degradation) during starvation. The protein is Ribonuclease PH of Nitrosospira multiformis (strain ATCC 25196 / NCIMB 11849 / C 71).